Here is a 285-residue protein sequence, read N- to C-terminus: HTH-type transcriptional regulator MurR (285 aa).

The 77-residue stretch at 1 to 77 (MLYLTKIRNA…MALIGEYSAS (77 aa)) folds into the HTH rpiR-type domain. The H-T-H motif DNA-binding region spans 37–56 (SRKMAKLLGISQSSIVKFAQ). The region spanning 128-268 (IIEAISKAPF…FVGLVQLNDV (141 aa)) is the SIS domain.

In terms of assembly, homotetramer.

Its pathway is amino-sugar metabolism; N-acetylmuramate degradation [regulation]. Functionally, represses the expression of the murPQ operon involved in the uptake and degradation of N-acetylmuramic acid (MurNAc). Binds to two adjacent inverted repeats within the operator region. MurNAc 6-phosphate, the substrate of MurQ, is the specific inducer that weakens binding of MurR to the operator. The sequence is that of HTH-type transcriptional regulator MurR from Escherichia coli O17:K52:H18 (strain UMN026 / ExPEC).